The chain runs to 264 residues: Thymidylate synthase (264 aa).

DUMP-binding positions include R21 and 126–127 (RR). C146 functions as the Nucleophile in the catalytic mechanism. Residues 166–169 (RSAD), N177, and 207–209 (HLY) each bind dUMP. Residue D169 coordinates (6R)-5,10-methylene-5,6,7,8-tetrahydrofolate. (6R)-5,10-methylene-5,6,7,8-tetrahydrofolate is bound at residue A263.

It belongs to the thymidylate synthase family. Bacterial-type ThyA subfamily. In terms of assembly, homodimer.

Its subcellular location is the cytoplasm. The catalysed reaction is dUMP + (6R)-5,10-methylene-5,6,7,8-tetrahydrofolate = 7,8-dihydrofolate + dTMP. It participates in pyrimidine metabolism; dTTP biosynthesis. Catalyzes the reductive methylation of 2'-deoxyuridine-5'-monophosphate (dUMP) to 2'-deoxythymidine-5'-monophosphate (dTMP) while utilizing 5,10-methylenetetrahydrofolate (mTHF) as the methyl donor and reductant in the reaction, yielding dihydrofolate (DHF) as a by-product. This enzymatic reaction provides an intracellular de novo source of dTMP, an essential precursor for DNA biosynthesis. The chain is Thymidylate synthase from Bradyrhizobium sp. (strain ORS 278).